The following is a 338-amino-acid chain: Glycerol-3-phosphate dehydrogenase [NAD(P)+] (338 aa).

Positions 14, 15, 35, and 109 each coordinate NADPH. Sn-glycerol 3-phosphate is bound by residues K109, G138, and T140. A142 provides a ligand contact to NADPH. The sn-glycerol 3-phosphate site is built by K194, D247, S257, R258, and N259. The active-site Proton acceptor is K194. Residue R258 coordinates NADPH. 2 residues coordinate NADPH: V282 and E284.

Belongs to the NAD-dependent glycerol-3-phosphate dehydrogenase family.

The protein resides in the cytoplasm. The enzyme catalyses sn-glycerol 3-phosphate + NAD(+) = dihydroxyacetone phosphate + NADH + H(+). The catalysed reaction is sn-glycerol 3-phosphate + NADP(+) = dihydroxyacetone phosphate + NADPH + H(+). It functions in the pathway membrane lipid metabolism; glycerophospholipid metabolism. Catalyzes the reduction of the glycolytic intermediate dihydroxyacetone phosphate (DHAP) to sn-glycerol 3-phosphate (G3P), the key precursor for phospholipid synthesis. This chain is Glycerol-3-phosphate dehydrogenase [NAD(P)+], found in Shewanella frigidimarina (strain NCIMB 400).